The chain runs to 590 residues: Regulatory solute carrier protein family 1 member 1 (590 aa).

Disordered regions lie at residues 1-116, 144-234, 277-331, and 359-466; these read MSSS…TQGL, EEGW…PDSE, SPSS…AEES, and EEVT…SHRT. Positions 16 to 35 are enriched in polar residues; it reads SSGQSPEAGNPTSLARSVSA. The span at 78-91 shows a compositional bias: low complexity; sequence SPCAAAAAPSSAMP. Residues 150-161 are compositionally biased toward polar residues; sequence ENQNPSQVNDLQ. 2 stretches are compositionally biased toward basic and acidic residues: residues 162–179 and 188–203; these read QHQEPENARHEAGPRDAP and PGERQQKHEVADREAT. Residues 313–331 are compositionally biased toward low complexity; the sequence is SSSSVCGSSQPPAESAEES. Polar residues predominate over residues 362–376; that stretch reads TCQSEGTAWGQTRVN. 2 stretches are compositionally biased toward basic and acidic residues: residues 380–395 and 404–420; these read RWTESERRTQDEDRPQ and VKTEKLTDASPDTRIED. The segment covering 451 to 465 has biased composition (polar residues); the sequence is SVTVTSAETSNQSHR. Residues 544 to 584 enclose the UBA domain; it reads GFPAADIDRILRAGFTLQEALGALHRVGGNADLALLVLLAK.

Interacts with YRDC. As to expression, highly expressed in renal outer medulla, renal inner medulla, duodenum, ileum and jejunum. Moderately expressed in renal outer cortex, renal papilla, brain and liver.

The protein resides in the cell membrane. Its subcellular location is the nucleus. It localises to the golgi apparatus. It is found in the trans-Golgi network. In terms of biological role, mediates transcriptional and post-transcriptional regulation of SLC5A1. Inhibits a dynamin and PKC-dependent exocytotic pathway of SLC5A1. Also involved in transcriptional regulation of SLC22A2. Exhibits glucose-dependent, short-term inhibition of SLC5A1 and SLC22A2 by inhibiting the release of vesicles from the trans-Golgi network. The protein is Regulatory solute carrier protein family 1 member 1 (RSC1A1) of Oryctolagus cuniculus (Rabbit).